The chain runs to 261 residues: U11/U12 small nuclear ribonucleoprotein 31 kDa protein (261 aa).

Residues 18-51 (YYRYSSVAAPPPSNPKHQPSSSAKSSAPGGGSGG) form a disordered region. The 79-residue stretch at 57–135 (STLYVSNLDF…RKLTVSIAAD (79 aa)) folds into the RRM domain. The CCHC-type zinc-finger motif lies at 153 to 169 (RCYECGDEGHLSYECPK). Positions 165 to 261 (YECPKNQLGP…YFSDESDDED (97 aa)) are disordered. A compositionally biased stretch (basic and acidic residues) spans 226–235 (AGERLRKREA).

Component of the U11/U12 snRNPs that are part of the U12-type spliceosome. As to expression, ubiquitous. Abundantly expressed in the shoot apical neristem.

It is found in the nucleus. Its function is as follows. RNA chaperone required for proper U12 intron splicing and for normal growth and development of plants. Mainly responsible for meristem activity. Plays a role in regulating cell division. The polypeptide is U11/U12 small nuclear ribonucleoprotein 31 kDa protein (SNRNP31) (Arabidopsis thaliana (Mouse-ear cress)).